The following is a 99-amino-acid chain: Large ribosomal subunit protein uL23 (99 aa).

Belongs to the universal ribosomal protein uL23 family. As to quaternary structure, part of the 50S ribosomal subunit. Contacts protein L29, and trigger factor when it is bound to the ribosome.

One of the early assembly proteins it binds 23S rRNA. One of the proteins that surrounds the polypeptide exit tunnel on the outside of the ribosome. Forms the main docking site for trigger factor binding to the ribosome. This Ectopseudomonas mendocina (strain ymp) (Pseudomonas mendocina) protein is Large ribosomal subunit protein uL23.